We begin with the raw amino-acid sequence, 64 residues long: uncharacterized protein (64 aa).

This is an uncharacterized protein from Saccharomyces cerevisiae (strain ATCC 204508 / S288c) (Baker's yeast).